The sequence spans 402 residues: Type II NADH:quinone oxidoreductase (402 aa).

Residues Gly-12–Ala-16, Asn-39–Lys-40, and Val-83 contribute to the FAD site. Glu-172 is an active-site residue. Residues Asp-302, Ala-319 to Gln-320, and Lys-379 contribute to the FAD site.

The protein belongs to the NADH dehydrogenase family. FAD is required as a cofactor.

The protein resides in the cell membrane. It carries out the reaction a quinone + NADH + H(+) = a quinol + NAD(+). In terms of biological role, alternative, nonproton pumping NADH:quinone oxidoreductase that delivers electrons to the respiratory chain by oxidation of NADH and reduction of quinones, and contributes to the regeneration of NAD(+). The sequence is that of Type II NADH:quinone oxidoreductase from Staphylococcus aureus (strain MSSA476).